The following is a 330-amino-acid chain: Ribosomal RNA small subunit methyltransferase H (330 aa).

S-adenosyl-L-methionine-binding positions include 48 to 50 (GGH), Asp-67, Leu-101, Asp-115, and Gln-122.

It belongs to the methyltransferase superfamily. RsmH family.

It localises to the cytoplasm. It carries out the reaction cytidine(1402) in 16S rRNA + S-adenosyl-L-methionine = N(4)-methylcytidine(1402) in 16S rRNA + S-adenosyl-L-homocysteine + H(+). Specifically methylates the N4 position of cytidine in position 1402 (C1402) of 16S rRNA. The protein is Ribosomal RNA small subunit methyltransferase H of Pseudarthrobacter chlorophenolicus (strain ATCC 700700 / DSM 12829 / CIP 107037 / JCM 12360 / KCTC 9906 / NCIMB 13794 / A6) (Arthrobacter chlorophenolicus).